We begin with the raw amino-acid sequence, 937 residues long: C-1-tetrahydrofolate synthase, cytoplasmic (937 aa).

The segment at 1-309 is methylenetetrahydrofolate dehydrogenase and cyclohydrolase; sequence MALLLEGTSL…TLLPLKLQTP (309 aa). Substrate-binding positions include 50 to 54 and 97 to 99; these read YVRMK and VQL. NADP(+)-binding positions include 168 to 170 and Ser193; that span reads GRS. 268 to 272 contacts substrate; it reads PGSVG. Residues 310–937 are formyltetrahydrofolate synthetase; it reads VPSDIEIARS…AENGDIVGLS (628 aa). 374–381 is a binding site for ATP; sequence TPFGEGKS.

This sequence in the N-terminal section; belongs to the tetrahydrofolate dehydrogenase/cyclohydrolase family. The protein in the C-terminal section; belongs to the formate--tetrahydrofolate ligase family. As to quaternary structure, homodimer.

The protein resides in the cytoplasm. The enzyme catalyses (6R)-5,10-methylene-5,6,7,8-tetrahydrofolate + NADP(+) = (6R)-5,10-methenyltetrahydrofolate + NADPH. It carries out the reaction (6R)-5,10-methenyltetrahydrofolate + H2O = (6R)-10-formyltetrahydrofolate + H(+). It catalyses the reaction (6S)-5,6,7,8-tetrahydrofolate + formate + ATP = (6R)-10-formyltetrahydrofolate + ADP + phosphate. Its pathway is one-carbon metabolism; tetrahydrofolate interconversion. The polypeptide is C-1-tetrahydrofolate synthase, cytoplasmic (Schizosaccharomyces pombe (strain 972 / ATCC 24843) (Fission yeast)).